The sequence spans 138 residues: Large ribosomal subunit protein uL16 (138 aa).

A compositionally biased stretch (basic residues) spans methionine 1–threonine 16. The segment at methionine 1 to glycine 23 is disordered.

This sequence belongs to the universal ribosomal protein uL16 family. Part of the 50S ribosomal subunit.

Functionally, binds 23S rRNA and is also seen to make contacts with the A and possibly P site tRNAs. The chain is Large ribosomal subunit protein uL16 from Corynebacterium aurimucosum (strain ATCC 700975 / DSM 44827 / CIP 107346 / CN-1) (Corynebacterium nigricans).